An 87-amino-acid polypeptide reads, in one-letter code: Large ribosomal subunit protein bL28 (87 aa).

The protein belongs to the bacterial ribosomal protein bL28 family.

This is Large ribosomal subunit protein bL28 from Akkermansia muciniphila (strain ATCC BAA-835 / DSM 22959 / JCM 33894 / BCRC 81048 / CCUG 64013 / CIP 107961 / Muc).